A 315-amino-acid polypeptide reads, in one-letter code: Borealin (315 aa).

Disordered stretches follow at residues 103–126 (IEGHAPSATGSRNDEEDSSIGASG) and 138–226 (LRST…TPPM). Position 146 is a phosphothreonine (Thr146). Ser152 bears the Phosphoserine mark. Over residues 153-162 (ARARRARRSR) the composition is skewed to basic residues. The residue at position 163 (Ser163) is a Phosphoserine. Residues 178–188 (SISSSSSSSRN) show a composition bias toward low complexity. A Phosphoserine modification is found at Ser205. At Thr209 the chain carries Phosphothreonine. Phosphoserine is present on residues Ser218, Ser220, and Ser244.

It belongs to the borealin family. In terms of assembly, component of the CPC complex. As to expression, ubiquitously expressed in the early embryo. Expression is restricted to the ventral nerve cord and brain during later embryonic stages.

It localises to the nucleus. The protein resides in the chromosome. Its subcellular location is the centromere. It is found in the cytoplasm. The protein localises to the cytoskeleton. It localises to the spindle. In terms of biological role, component of the chromosomal passenger complex (CPC), a complex that acts as a key regulator of embryonic mitosis. The CPC complex has essential functions at the centromere for ensuring sister chromatid cohesion, recruitment of the CPC to kinetochores, and chromosome alignment and segregation. There is no function in meiotic histone phosphorylation or spindle formation. The chain is Borealin (borr) from Drosophila melanogaster (Fruit fly).